The sequence spans 520 residues: Fusaridione A cluster transcription factor fsdR (520 aa).

Residues 1 to 30 (MSTGPPSGISLVSMTTPRKSGQHTPESWSK) are disordered.

It localises to the nucleus. Its function is as follows. Transcription factor that regulates the expression of the gene cluster that mediates the biosynthesis of fusaridione A. The chain is Fusaridione A cluster transcription factor fsdR from Fusarium heterosporum.